A 242-amino-acid chain; its full sequence is Probable transcriptional regulatory protein MHP7448_0474 (242 aa).

Belongs to the TACO1 family.

Its subcellular location is the cytoplasm. The sequence is that of Probable transcriptional regulatory protein MHP7448_0474 from Mesomycoplasma hyopneumoniae (strain 7448) (Mycoplasma hyopneumoniae).